The following is a 182-amino-acid chain: Early upstream open reading frame (182 aa).

Belongs to the EUO family.

This Chlamydophila psittaci (strain ATCC VR-125 / 6BC) (Chlamydia psittaci) protein is Early upstream open reading frame.